A 404-amino-acid chain; its full sequence is Odorant receptor 67c (404 aa).

Residues 1-45 are Cytoplasmic-facing; sequence METAKDNTARTFMELMRVPVQFYRTIGEDIYAHRSTNPLKSLLFK. The chain crosses the membrane as a helical span at residues 46-66; the sequence is IYLYAGFINFNLLVIGELVFF. Topologically, residues 67-79 are extracellular; the sequence is YNSIQDFETIRLA. Residues 80–100 traverse the membrane as a helical segment; that stretch reads IAVAPCIGFSLVADFKQAAMI. The Cytoplasmic portion of the chain corresponds to 101–139; that stretch reads RGKKTLIMLLDDLENMHPKTLAKQMEYKLPDFEKTMKRV. The helical transmembrane segment at 140 to 160 threads the bilayer; it reads INIFTFLCLAYTTTFSFYPAI. Over 161–204 the chain is Extracellular; the sequence is KASVKFNFLGYDTFDRNFGFLIWFPFDATRNNLIYWIMYWDIAH. The helical transmembrane segment at 205 to 225 threads the bilayer; that stretch reads GAYLAGIAFLCADLLLVVVIT. The Cytoplasmic segment spans residues 226 to 277; the sequence is QICMHFNYISMRLEDHPCNSNEDKENIEFLIGIIRYHDKCLKLCEHVNDLYS. The helical transmembrane segment at 278–298 threads the bilayer; it reads FSLLLNFLMASMQICFIAFQV. The Extracellular portion of the chain corresponds to 299–304; it reads TESTVE. A helical membrane pass occupies residues 305-326; it reads VIIIYCIFLMTSMVQVFMVCYY. Residues 327 to 373 lie on the Cytoplasmic side of the membrane; it reads GDTLIAASLKVGDAAYNQKWFQCSKSYCTMLKLLIMRSQKPASIRPP. A helical membrane pass occupies residues 374–394; that stretch reads TFPPISLVTYMKVISMSYQFF. The Extracellular segment spans residues 395–404; the sequence is ALLRTTYSNN.

Belongs to the insect chemoreceptor superfamily. Heteromeric odorant receptor channel (TC 1.A.69) family. Or49a subfamily. In terms of assembly, interacts with Orco. Complexes exist early in the endomembrane system in olfactory sensory neurons (OSNs), coupling these complexes to the conserved ciliary trafficking pathway. As to expression, expressed in olfactory sensory neurons in the antenna.

Its subcellular location is the cell membrane. Functionally, odorant receptor which mediates acceptance or avoidance behavior, depending on its substrates. The odorant receptor repertoire encodes a large collection of odor stimuli that vary widely in identity, intensity, and duration. May form a complex with Orco to form odorant-sensing units, providing sensitive and prolonged odorant signaling and calcium permeability. In Drosophila melanogaster (Fruit fly), this protein is Odorant receptor 67c (Or67c).